A 726-amino-acid chain; its full sequence is Catalase-peroxidase (726 aa).

Positions 96–224 form a cross-link, tryptophyl-tyrosyl-methioninium (Trp-Tyr) (with M-250); that stretch reads WHSAGTYRIA…LAAVMMGLIY (129 aa). H97 (proton acceptor) is an active-site residue. The tryptophyl-tyrosyl-methioninium (Tyr-Met) (with W-96) cross-link spans 224 to 250; it reads YVNPEGVDGKPDPLKTAHDMRVTFARM. H265 lines the heme b pocket.

It belongs to the peroxidase family. Peroxidase/catalase subfamily. As to quaternary structure, homodimer or homotetramer. It depends on heme b as a cofactor. Post-translationally, formation of the three residue Trp-Tyr-Met cross-link is important for the catalase, but not the peroxidase activity of the enzyme.

The catalysed reaction is H2O2 + AH2 = A + 2 H2O. It catalyses the reaction 2 H2O2 = O2 + 2 H2O. In terms of biological role, bifunctional enzyme with both catalase and broad-spectrum peroxidase activity. This is Catalase-peroxidase from Vibrio campbellii (strain ATCC BAA-1116).